A 213-amino-acid polypeptide reads, in one-letter code: MQFSSAVVLSAVAGSALAAYSNSTVTDIQTTVVTITSCEENKCHETEVTTGVTTVTEVDTTYTTYCPLSTTEAPAPSTATDVSTTVVTITSCEEDKCHETAVTTGVTTVTEGTTIYTTYCPLPSTEAPGPAPSTAEESKPAESSPVPTTAAESSPAKTTAAESSPAQETTPKTVAAESSSAETTAPAVSTAEAGAAANAVPVAAGLLALAALF.

An N-terminal signal peptide occupies residues 1–18 (MQFSSAVVLSAVAGSALA). An N-linked (GlcNAc...) asparagine glycan is attached at Asn-22. Positions 120–194 (CPLPSTEAPG…APAVSTAEAG (75 aa)) are disordered. The segment covering 145 to 172 (PVPTTAAESSPAKTTAAESSPAQETTPK) has biased composition (polar residues). Over residues 173 to 194 (TVAAESSSAETTAPAVSTAEAG) the composition is skewed to low complexity. Gly-194 carries GPI-anchor amidated glycine lipidation. Positions 195–213 (AAANAVPVAAGLLALAALF) are cleaved as a propeptide — removed in mature form.

This sequence belongs to the HWP1 family. In terms of processing, N- and O-glycosylated. The GPI-anchor is attached to the protein in the endoplasmic reticulum and serves to target the protein to the cell surface. There, the glucosamine-inositol phospholipid moiety is cleaved off and the GPI-modified mannoprotein is covalently attached via its lipidless GPI glycan remnant to the 1,6-beta-glucan of the outer cell wall layer.

The protein localises to the secreted. The protein resides in the cell wall. Its subcellular location is the membrane. Functionally, cell wall protein necessary for cell wall integrity. Plays only a minor role in hyphal morphogenesis and is not critical to biofilm formation. This is Cell wall protein PGA62 (PGA62) from Candida albicans (strain SC5314 / ATCC MYA-2876) (Yeast).